The sequence spans 254 residues: MKDERRPICEVVAESIERLIIDGVLKVGQPLPSERRLCEKLGFSRSALREGLTVLRGRGIIETAQGRDSRVARLNRVQDTSPLIHLFSTQPRTLYDLLDVRALLEGESARLAATLGTQADFVVITRCYEKMLAASENNKEISLIEHAQLDHAFHLAICQASHNQVLVFTLQSLTDLMFNSVFASVNNLYHRPQQKKQIDRQHARIYNAVLQRLPHVAQRAARDHVRTVKKNLHDIELEGHHLIRSAVPLEMNLS.

Residues 6–74 (RPICEVVAES…QGRDSRVARL (69 aa)) enclose the HTH gntR-type domain. A DNA-binding region (H-T-H motif) is located at residues 34-53 (ERRLCEKLGFSRSALREGLT).

Functionally, transcriptional activator of the glcDEFGB operon which is associated with glycolate utilization, and encodes malate synthase G and the genes needed for glycolate oxidase activity. Also negatively regulates the transcription of its own gene. Glycolate acts as an effector, but GlcC can also use acetate as an alternative effector. This Escherichia coli O6:H1 (strain CFT073 / ATCC 700928 / UPEC) protein is Glc operon transcriptional activator (glcC).